Here is a 275-residue protein sequence, read N- to C-terminus: NH(3)-dependent NAD(+) synthetase (275 aa).

Glycine 46–serine 53 is a binding site for ATP. Residue aspartate 52 coordinates Mg(2+). Residue arginine 140 participates in deamido-NAD(+) binding. Threonine 160 serves as a coordination point for ATP. Glutamate 165 contributes to the Mg(2+) binding site. The deamido-NAD(+) site is built by lysine 173 and aspartate 180. Residues lysine 189 and threonine 211 each coordinate ATP. Residue histidine 260–lysine 261 participates in deamido-NAD(+) binding.

It belongs to the NAD synthetase family. As to quaternary structure, homodimer.

The catalysed reaction is deamido-NAD(+) + NH4(+) + ATP = AMP + diphosphate + NAD(+) + H(+). It participates in cofactor biosynthesis; NAD(+) biosynthesis; NAD(+) from deamido-NAD(+) (ammonia route): step 1/1. Its function is as follows. Catalyzes the ATP-dependent amidation of deamido-NAD to form NAD. Uses ammonia as a nitrogen source. In Escherichia coli O127:H6 (strain E2348/69 / EPEC), this protein is NH(3)-dependent NAD(+) synthetase.